Consider the following 427-residue polypeptide: Enolase (427 aa).

Q163 contacts (2R)-2-phosphoglycerate. E205 (proton donor) is an active-site residue. The Mg(2+) site is built by D242, E285, and D312. (2R)-2-phosphoglycerate is bound by residues K337, R366, S367, and K388. The Proton acceptor role is filled by K337.

This sequence belongs to the enolase family. Requires Mg(2+) as cofactor.

The protein localises to the cytoplasm. Its subcellular location is the secreted. It localises to the cell surface. The catalysed reaction is (2R)-2-phosphoglycerate = phosphoenolpyruvate + H2O. It functions in the pathway carbohydrate degradation; glycolysis; pyruvate from D-glyceraldehyde 3-phosphate: step 4/5. In terms of biological role, catalyzes the reversible conversion of 2-phosphoglycerate (2-PG) into phosphoenolpyruvate (PEP). It is essential for the degradation of carbohydrates via glycolysis. The polypeptide is Enolase (Ralstonia nicotianae (strain ATCC BAA-1114 / GMI1000) (Ralstonia solanacearum)).